Reading from the N-terminus, the 59-residue chain is Sec-independent protein translocase protein TatA (59 aa).

The helical transmembrane segment at 1 to 21 (MFSNIGFPGLILILVAVLILF) threads the bilayer.

It belongs to the TatA/E family. In terms of assembly, forms a complex with TatC.

It is found in the cell membrane. In terms of biological role, part of the twin-arginine translocation (Tat) system that transports large folded proteins containing a characteristic twin-arginine motif in their signal peptide across membranes. TatA could form the protein-conducting channel of the Tat system. This chain is Sec-independent protein translocase protein TatA, found in Bacillus mycoides (strain KBAB4) (Bacillus weihenstephanensis).